The primary structure comprises 390 residues: Succinate--CoA ligase [ADP-forming] subunit beta (390 aa).

Positions 9–244 constitute an ATP-grasp domain; the sequence is KSLFQQYGIP…ISQEDVREAK (236 aa). Residues K46, E99, L102, and E107 each coordinate ATP. 2 residues coordinate Mg(2+): N199 and D213. Residues N264 and 321–323 contribute to the substrate site; that span reads GIV.

The protein belongs to the succinate/malate CoA ligase beta subunit family. Heterotetramer of two alpha and two beta subunits. Mg(2+) is required as a cofactor.

It carries out the reaction succinate + ATP + CoA = succinyl-CoA + ADP + phosphate. It catalyses the reaction GTP + succinate + CoA = succinyl-CoA + GDP + phosphate. It functions in the pathway carbohydrate metabolism; tricarboxylic acid cycle; succinate from succinyl-CoA (ligase route): step 1/1. Succinyl-CoA synthetase functions in the citric acid cycle (TCA), coupling the hydrolysis of succinyl-CoA to the synthesis of either ATP or GTP and thus represents the only step of substrate-level phosphorylation in the TCA. The beta subunit provides nucleotide specificity of the enzyme and binds the substrate succinate, while the binding sites for coenzyme A and phosphate are found in the alpha subunit. In Hydrogenovibrio crunogenus (strain DSM 25203 / XCL-2) (Thiomicrospira crunogena), this protein is Succinate--CoA ligase [ADP-forming] subunit beta.